The chain runs to 152 residues: Interleukin-3 (152 aa).

The first 19 residues, 1–19 (MSRLPVLLLLQLLVRPGLQ), serve as a signal peptide directing secretion. N34 and N89 each carry an N-linked (GlcNAc...) asparagine glycan. A disulfide bridge links C35 with C103.

This sequence belongs to the IL-3 family. Monomer. Activated T-cells, mast cells, natural killer cells.

Its subcellular location is the secreted. In terms of biological role, granulocyte/macrophage colony-stimulating factors are cytokines that act in hematopoiesis by controlling the production, differentiation, and function of 2 related white cell populations of the blood, the granulocytes and the monocytes-macrophages. Functionally, this CSF induces granulocytes, macrophages, mast cells, stem cells, erythroid cells, eosinophils and megakaryocytes. This is Interleukin-3 (IL3) from Pan troglodytes (Chimpanzee).